The following is a 398-amino-acid chain: Putative molybdopterin biosynthesis protein MJ0666 (398 aa).

Belongs to the MoeA family.

It functions in the pathway cofactor biosynthesis; molybdopterin biosynthesis. The sequence is that of Putative molybdopterin biosynthesis protein MJ0666 from Methanocaldococcus jannaschii (strain ATCC 43067 / DSM 2661 / JAL-1 / JCM 10045 / NBRC 100440) (Methanococcus jannaschii).